Here is a 661-residue protein sequence, read N- to C-terminus: DNA-directed RNA polymerase subunit beta' (661 aa).

Residues cysteine 69, cysteine 71, cysteine 87, and cysteine 90 each contribute to the Zn(2+) site. Mg(2+)-binding residues include aspartate 489, aspartate 491, and aspartate 493.

This sequence belongs to the RNA polymerase beta' chain family. RpoC1 subfamily. As to quaternary structure, in plastids the minimal PEP RNA polymerase catalytic core is composed of four subunits: alpha, beta, beta', and beta''. When a (nuclear-encoded) sigma factor is associated with the core the holoenzyme is formed, which can initiate transcription. Mg(2+) serves as cofactor. It depends on Zn(2+) as a cofactor.

It is found in the plastid. The protein localises to the chloroplast. It carries out the reaction RNA(n) + a ribonucleoside 5'-triphosphate = RNA(n+1) + diphosphate. DNA-dependent RNA polymerase catalyzes the transcription of DNA into RNA using the four ribonucleoside triphosphates as substrates. This chain is DNA-directed RNA polymerase subunit beta', found in Chaetosphaeridium globosum (Charophycean green alga).